A 90-amino-acid polypeptide reads, in one-letter code: Progonadoliberin-3 (90 aa).

Residues 1–23 (MEASSRVTVQVLLLALVVQVTLS) form the signal peptide. Position 24 is a pyrrolidone carboxylic acid (glutamine 24). A Glycine amide modification is found at glycine 33.

It belongs to the GnRH family.

Its subcellular location is the secreted. Its function is as follows. Stimulates the secretion of gonadotropins. This chain is Progonadoliberin-3 (gnrh3), found in Pagrus major (Red sea bream).